The sequence spans 449 residues: Dolichyl-diphosphooligosaccharide--protein glycosyltransferase 48 kDa subunit (449 aa).

The first 18 residues, 1–18 (MMWKALLIAVLAIAHCQA), serve as a signal peptide directing secretion. Residues 19-412 (VLETDANTLV…ERFIPSAFPY (394 aa)) lie on the Lumenal side of the membrane. Residues 413-433 (YTSAFSMMIGVFVFSFVFLHF) form a helical membrane-spanning segment. The Cytoplasmic segment spans residues 434-449 (KDEPVGRAAKEDKKSQ).

It belongs to the DDOST 48 kDa subunit family. In terms of assembly, component of the oligosaccharyltransferase (OST) complex.

Its subcellular location is the endoplasmic reticulum membrane. The protein operates within protein modification; protein glycosylation. In terms of biological role, subunit of the oligosaccharyl transferase (OST) complex that catalyzes the initial transfer of a defined glycan (Glc(3)Man(9)GlcNAc(2) in eukaryotes) from the lipid carrier dolichol-pyrophosphate to an asparagine residue within an Asn-X-Ser/Thr consensus motif in nascent polypeptide chains, the first step in protein N-glycosylation. N-glycosylation occurs cotranslationally and the complex associates with the Sec61 complex at the channel-forming translocon complex that mediates protein translocation across the endoplasmic reticulum (ER). All subunits are required for a maximal enzyme activity. Required for the assembly of both SST3A- and SS3B-containing OST complexes. The polypeptide is Dolichyl-diphosphooligosaccharide--protein glycosyltransferase 48 kDa subunit (Ost48) (Drosophila melanogaster (Fruit fly)).